The primary structure comprises 757 residues: MDVNPTLLFLKVPAQNAISTTFPYTGDPPYSHGTGTGYTMDTVNRTHQYSERGKWTTNTETGAPQLNPIDGPLPKDNEPSGYAQTDCVLEAMAFLEGSHPGIFENSCLETMEVVQQTRVDKLTQGRQTYDWTLNRNQPAATALANTIEVFRSNGLTANESGRLIDFLKDVMESMDKEEMEIITHFQRKRRVRDNMTKKMITQRTIGKKKQRLNKRSYLIRALTLNTMTKDAERGKLKRRAIATPGMQIRGFVYFVETLARSICEKLEQSGLPVGGNEKKAKLANVVRKMMTNSQDTELSFTITGDNTKWNENQNPRMFLAMITYITRNQPEWFRNVLSIAPIMFSNKMARLGKGYMFESKSMKLRTQIPAEMLASIDLKYFNESTRKKIEKIRPLLIDGTASLSPGMMMGMFNMLSTVLGVSILNLGQKRYTKTTYWWDGLQSSDDFALIVNAPNHEGIQAGVDRFYRTCKLVGINMSKKKSYINRTGTFEFTSFFYRYGFVANFSMELPSFGVSGINESADMSIGVTVIKNNMINNDLGPATAQMALQLFIKDYRYTYRCHRGDTQIQTRRSFELKKLWEQTRSKAGLLVSDGGPNLYNIRNLHIPEVCLKWELMDEDYQGRLCNPLNPFISHKEIESVNNAVVMPAHGPAKSMEYDAVATTHSWIPKRNRSILNTSQRGILEDEQMYQKCCNLFEKFFPSSSYRRPVGISSMVEAMVSRARIDARIDFESGRIKKEEFAEIMKICFTIEELRRQK.

Positions 53–82 are disordered; sequence GKWTTNTETGAPQLNPIDGPLPKDNEPSGY. Over residues 55 to 64 the composition is skewed to polar residues; sequence WTTNTETGAP. 2 consecutive short sequence motifs (nuclear localization signal) follow at residues 187–195 and 203–216; these read RKRRVRDNM and RTIGKKKQRLNKRS. The segment at 249–256 is promoter-binding site; that stretch reads RGFVYFVE. Residues 286–483 enclose the RdRp catalytic domain; the sequence is VRKMMTNSQD…GINMSKKKSY (198 aa).

It belongs to the influenza viruses polymerase PB1 family. Influenza RNA polymerase is composed of three subunits: PB1, PB2 and PA. Interacts (via N-terminus) with PA (via C-terminus). Interacts (via C-terminus) with PB2 (via N-terminus); this interaction is essential for transcription initiation. Post-translationally, phosphorylated by host PRKCA.

It localises to the host nucleus. It is found in the host cytoplasm. The enzyme catalyses RNA(n) + a ribonucleoside 5'-triphosphate = RNA(n+1) + diphosphate. Its function is as follows. RNA-dependent RNA polymerase which is responsible for replication and transcription of virus RNA segments. The transcription of viral mRNAs occurs by a unique mechanism called cap-snatching. 5' methylated caps of cellular mRNAs are cleaved after 10-13 nucleotides by PA. In turn, these short capped RNAs are used as primers by PB1 for transcription of viral mRNAs. During virus replication, PB1 initiates RNA synthesis and copy vRNA into complementary RNA (cRNA) which in turn serves as a template for the production of more vRNAs. The polypeptide is RNA-directed RNA polymerase catalytic subunit (Influenza A virus (strain A/Duck/Czechoslovakia/1956 H4N6)).